The following is an 87-amino-acid chain: UPF0250 protein ECA1299 (87 aa).

This sequence belongs to the UPF0250 family.

The protein is UPF0250 protein ECA1299 of Pectobacterium atrosepticum (strain SCRI 1043 / ATCC BAA-672) (Erwinia carotovora subsp. atroseptica).